The primary structure comprises 203 residues: Large ribosomal subunit protein bL25 (203 aa).

This sequence belongs to the bacterial ribosomal protein bL25 family. CTC subfamily. Part of the 50S ribosomal subunit; part of the 5S rRNA/L5/L18/L25 subcomplex. Contacts the 5S rRNA. Binds to the 5S rRNA independently of L5 and L18.

This is one of the proteins that binds to the 5S RNA in the ribosome where it forms part of the central protuberance. The protein is Large ribosomal subunit protein bL25 of Rickettsia conorii (strain ATCC VR-613 / Malish 7).